We begin with the raw amino-acid sequence, 500 residues long: Beta-glucosidase 2 (500 aa).

The N-terminal stretch at 1–24 (MGAAAAAGFFFVLLFLSVQGGAVG) is a signal peptide. A beta-D-glucoside is bound by residues glutamine 44 and histidine 144. Glutamate 190 (proton donor) is an active-site residue. The cysteines at positions 209 and 218 are disulfide-linked. N-linked (GlcNAc...) asparagine glycosylation is present at asparagine 222. Tyrosine 334 and glutamate 403 together coordinate a beta-D-glucoside. The active-site Nucleophile is the glutamate 403. N-linked (GlcNAc...) asparagine glycosylation occurs at asparagine 410. Tryptophan 445 is an a beta-D-glucoside binding site.

Belongs to the glycosyl hydrolase 1 family.

The enzyme catalyses Hydrolysis of terminal, non-reducing beta-D-glucosyl residues with release of beta-D-glucose.. This is Beta-glucosidase 2 (BGLU2) from Oryza sativa subsp. japonica (Rice).